A 353-amino-acid chain; its full sequence is MGCGMSTEEKEGKARNEEIENQLKRDRMQQRNEIKMLLLGAGESGKSTILKQMKLIHEGGYSRDERESFKEIIFSNTVQSMRVILEAMESLELPLADQRVEYHVQTIFMQPAQIEGDVLPPEVGNAIEALWRDAGVQSCFKRSREYQLNDSARYYFDNIARIAAPDYMPNDQDVLRSRVKTTGITETTFIIGDLTYRMFDVGGQRSERKKWIHCFENVTTILFLVAISEYDQLLFEDETVNRMQEALTLFDSICNSRWFIKTSIILFLNKIDRFKEKLPVSPMKNYFPDYEGGDDYAAACDYILNRFVSLNQHETKQIYTHFTCATDTTQIRFVMAAVNDIIIQENLRLCGLI.

The tract at residues 1–26 (MGCGMSTEEKEGKARNEEIENQLKRD) is disordered. A lipid anchor (N-myristoyl glycine) is attached at G2. C3 carries the S-palmitoyl cysteine lipid modification. Residues 7–26 (TEEKEGKARNEEIENQLKRD) are compositionally biased toward basic and acidic residues. Residues 32-353 (NEIKMLLLGA…QENLRLCGLI (322 aa)) enclose the G-alpha domain. Positions 35 to 48 (KMLLLGAGESGKST) are G1 motif. The GTP site is built by E43, S44, G45, K46, S47, T48, D150, L175, T181, G203, N269, K270, D272, and A325. S47 provides a ligand contact to Mg(2+). Positions 173-181 (DVLRSRVKT) are G2 motif. T181 is a Mg(2+) binding site. A G3 motif region spans residues 196 to 205 (YRMFDVGGQR). The interval 265 to 272 (ILFLNKID) is G4 motif. The tract at residues 323–328 (TCATDT) is G5 motif.

Belongs to the G-alpha family. G(q) subfamily. As to quaternary structure, g proteins are composed of 3 units; alpha, beta and gamma. The alpha chain contains the guanine nucleotide binding site. Requires Mg(2+) as cofactor.

Its function is as follows. Guanine nucleotide-binding proteins (G proteins) are involved as modulators or transducers in various transmembrane signaling systems. In Neurospora crassa (strain ATCC 24698 / 74-OR23-1A / CBS 708.71 / DSM 1257 / FGSC 987), this protein is Guanine nucleotide-binding protein alpha-1 subunit (gna-1).